A 217-amino-acid chain; its full sequence is Phosphoribosylformylglycinamidine synthase subunit PurQ (217 aa).

The Glutamine amidotransferase type-1 domain occupies 2-217 (NIGIIVFPGS…GKSILSTLLS (216 aa)). Catalysis depends on C86, which acts as the Nucleophile. Active-site residues include H194 and E196.

In terms of assembly, part of the FGAM synthase complex composed of 1 PurL, 1 PurQ and 2 PurS subunits.

It localises to the cytoplasm. It carries out the reaction N(2)-formyl-N(1)-(5-phospho-beta-D-ribosyl)glycinamide + L-glutamine + ATP + H2O = 2-formamido-N(1)-(5-O-phospho-beta-D-ribosyl)acetamidine + L-glutamate + ADP + phosphate + H(+). The enzyme catalyses L-glutamine + H2O = L-glutamate + NH4(+). The protein operates within purine metabolism; IMP biosynthesis via de novo pathway; 5-amino-1-(5-phospho-D-ribosyl)imidazole from N(2)-formyl-N(1)-(5-phospho-D-ribosyl)glycinamide: step 1/2. Functionally, part of the phosphoribosylformylglycinamidine synthase complex involved in the purines biosynthetic pathway. Catalyzes the ATP-dependent conversion of formylglycinamide ribonucleotide (FGAR) and glutamine to yield formylglycinamidine ribonucleotide (FGAM) and glutamate. The FGAM synthase complex is composed of three subunits. PurQ produces an ammonia molecule by converting glutamine to glutamate. PurL transfers the ammonia molecule to FGAR to form FGAM in an ATP-dependent manner. PurS interacts with PurQ and PurL and is thought to assist in the transfer of the ammonia molecule from PurQ to PurL. This chain is Phosphoribosylformylglycinamidine synthase subunit PurQ, found in Prochlorococcus marinus (strain NATL2A).